Here is a 208-residue protein sequence, read N- to C-terminus: Small ribosomal subunit protein uS2 (208 aa).

The protein belongs to the universal ribosomal protein uS2 family.

The polypeptide is Small ribosomal subunit protein uS2 (Pyrobaculum calidifontis (strain DSM 21063 / JCM 11548 / VA1)).